Reading from the N-terminus, the 144-residue chain is MNFKYIVAVSFLIASAYARSVKNDEQSLSQRDVLEEESLREIRGIGRKFLGGVKTTFRCGVKDFASKHLYGKRTAEEHEVMKRLEAIMRDLDSLDHPEEASERETRGFNQDEIANLFTKKEKRILGPVLGLVGNALGGLIKKIG.

The N-terminal stretch at M1–A18 is a signal peptide. A propeptide spanning residues R19 to R43 is cleaved from the precursor. Y70 is subject to Tyrosine amide. Positions T74 to R123 are excised as a propeptide. The residue at position 143 (I143) is an Isoleucine amide.

Belongs to the bombinin family. As to expression, expressed by the skin glands.

It is found in the secreted. Functionally, maximin-9 shows antimicrobial activity against bacteria and against the fungus C.albicans. It has little hemolytic activity. In terms of biological role, maximin-H3 shows antibacterial activity against both Gram-positive and Gram-negative bacteria. It also shows antimicrobial activity against the fungus C.albicans. Shows strong hemolytic activity. The chain is Maximins 9/H3 from Bombina maxima (Giant fire-bellied toad).